Consider the following 101-residue polypeptide: Small ribosomal subunit protein uS14 (101 aa).

Belongs to the universal ribosomal protein uS14 family. In terms of assembly, part of the 30S ribosomal subunit. Contacts proteins S3 and S10.

In terms of biological role, binds 16S rRNA, required for the assembly of 30S particles and may also be responsible for determining the conformation of the 16S rRNA at the A site. The polypeptide is Small ribosomal subunit protein uS14 (Pasteurella multocida (strain Pm70)).